We begin with the raw amino-acid sequence, 243 residues long: 1-(5-phosphoribosyl)-5-[(5-phosphoribosylamino)methylideneamino] imidazole-4-carboxamide isomerase (243 aa).

Catalysis depends on D14, which acts as the Proton acceptor. The active-site Proton donor is the D135.

This sequence belongs to the HisA/HisF family.

It localises to the cytoplasm. It carries out the reaction 1-(5-phospho-beta-D-ribosyl)-5-[(5-phospho-beta-D-ribosylamino)methylideneamino]imidazole-4-carboxamide = 5-[(5-phospho-1-deoxy-D-ribulos-1-ylimino)methylamino]-1-(5-phospho-beta-D-ribosyl)imidazole-4-carboxamide. The protein operates within amino-acid biosynthesis; L-histidine biosynthesis; L-histidine from 5-phospho-alpha-D-ribose 1-diphosphate: step 4/9. This is 1-(5-phosphoribosyl)-5-[(5-phosphoribosylamino)methylideneamino] imidazole-4-carboxamide isomerase from Rubrobacter xylanophilus (strain DSM 9941 / JCM 11954 / NBRC 16129 / PRD-1).